Consider the following 412-residue polypeptide: Multifunctional CCA protein (412 aa).

Residues G8 and R11 each contribute to the ATP site. Positions 8 and 11 each coordinate CTP. Positions 21 and 23 each coordinate Mg(2+). Positions 91, 137, and 140 each coordinate ATP. Residues R91, R137, and R140 each contribute to the CTP site. Residues 228–329 (TGIHTLMTLS…VKLFDSIDAW (102 aa)) enclose the HD domain.

This sequence belongs to the tRNA nucleotidyltransferase/poly(A) polymerase family. Bacterial CCA-adding enzyme type 1 subfamily. Monomer. Can also form homodimers and oligomers. The cofactor is Mg(2+). Requires Ni(2+) as cofactor.

The enzyme catalyses a tRNA precursor + 2 CTP + ATP = a tRNA with a 3' CCA end + 3 diphosphate. It catalyses the reaction a tRNA with a 3' CCA end + 2 CTP + ATP = a tRNA with a 3' CCACCA end + 3 diphosphate. Catalyzes the addition and repair of the essential 3'-terminal CCA sequence in tRNAs without using a nucleic acid template. Adds these three nucleotides in the order of C, C, and A to the tRNA nucleotide-73, using CTP and ATP as substrates and producing inorganic pyrophosphate. tRNA 3'-terminal CCA addition is required both for tRNA processing and repair. Also involved in tRNA surveillance by mediating tandem CCA addition to generate a CCACCA at the 3' terminus of unstable tRNAs. While stable tRNAs receive only 3'-terminal CCA, unstable tRNAs are marked with CCACCA and rapidly degraded. In Shigella flexneri, this protein is Multifunctional CCA protein.